The sequence spans 356 residues: Ferrochelatase (356 aa).

Fe cation-binding residues include H214 and E295.

This sequence belongs to the ferrochelatase family.

The protein localises to the cytoplasm. It carries out the reaction heme b + 2 H(+) = protoporphyrin IX + Fe(2+). It functions in the pathway porphyrin-containing compound metabolism; protoheme biosynthesis; protoheme from protoporphyrin-IX: step 1/1. Catalyzes the ferrous insertion into protoporphyrin IX. The chain is Ferrochelatase from Paraburkholderia xenovorans (strain LB400).